Consider the following 346-residue polypeptide: Flap endonuclease 1 (346 aa).

The tract at residues 1–102 is N-domain; the sequence is MGVTELGKLI…AEIEERRKAK (102 aa). Aspartate 31, aspartate 84, glutamate 156, glutamate 158, aspartate 177, aspartate 179, and aspartate 239 together coordinate Mg(2+). Positions 120–261 are I-domain; it reads EVAKYAKRAI…RALKLIWEFG (142 aa).

It belongs to the XPG/RAD2 endonuclease family. FEN1 subfamily. Interacts with PCNA. PCNA stimulates the nuclease activity without altering cleavage specificity. Mg(2+) is required as a cofactor.

Its function is as follows. Structure-specific nuclease with 5'-flap endonuclease and 5'-3' exonuclease activities involved in DNA replication and repair. During DNA replication, cleaves the 5'-overhanging flap structure that is generated by displacement synthesis when DNA polymerase encounters the 5'-end of a downstream Okazaki fragment. Binds the unpaired 3'-DNA end and kinks the DNA to facilitate 5' cleavage specificity. Cleaves one nucleotide into the double-stranded DNA from the junction in flap DNA, leaving a nick for ligation. Also involved in the base excision repair (BER) pathway. Acts as a genome stabilization factor that prevents flaps from equilibrating into structures that lead to duplications and deletions. Also possesses 5'-3' exonuclease activity on nicked or gapped double-stranded DNA. In Pyrobaculum arsenaticum (strain DSM 13514 / JCM 11321 / PZ6), this protein is Flap endonuclease 1.